The chain runs to 350 residues: N-acetyl-gamma-glutamyl-phosphate reductase (350 aa).

Cys153 is an active-site residue.

It belongs to the NAGSA dehydrogenase family. Type 1 subfamily.

It localises to the cytoplasm. The enzyme catalyses N-acetyl-L-glutamate 5-semialdehyde + phosphate + NADP(+) = N-acetyl-L-glutamyl 5-phosphate + NADPH + H(+). It functions in the pathway amino-acid biosynthesis; L-arginine biosynthesis; N(2)-acetyl-L-ornithine from L-glutamate: step 3/4. In terms of biological role, catalyzes the NADPH-dependent reduction of N-acetyl-5-glutamyl phosphate to yield N-acetyl-L-glutamate 5-semialdehyde. The sequence is that of N-acetyl-gamma-glutamyl-phosphate reductase from Thermosynechococcus vestitus (strain NIES-2133 / IAM M-273 / BP-1).